Reading from the N-terminus, the 417-residue chain is Serine hydroxymethyltransferase (417 aa).

(6S)-5,6,7,8-tetrahydrofolate is bound by residues L112 and 116 to 118 (GHL). At K221 the chain carries N6-(pyridoxal phosphate)lysine. E247 serves as a coordination point for (6S)-5,6,7,8-tetrahydrofolate.

The protein belongs to the SHMT family. As to quaternary structure, homodimer. The cofactor is pyridoxal 5'-phosphate.

The protein resides in the cytoplasm. The enzyme catalyses (6R)-5,10-methylene-5,6,7,8-tetrahydrofolate + glycine + H2O = (6S)-5,6,7,8-tetrahydrofolate + L-serine. It participates in one-carbon metabolism; tetrahydrofolate interconversion. Its pathway is amino-acid biosynthesis; glycine biosynthesis; glycine from L-serine: step 1/1. Its function is as follows. Catalyzes the reversible interconversion of serine and glycine with tetrahydrofolate (THF) serving as the one-carbon carrier. This reaction serves as the major source of one-carbon groups required for the biosynthesis of purines, thymidylate, methionine, and other important biomolecules. Also exhibits THF-independent aldolase activity toward beta-hydroxyamino acids, producing glycine and aldehydes, via a retro-aldol mechanism. The sequence is that of Serine hydroxymethyltransferase from Borrelia hermsii (strain HS1 / DAH).